Here is a 159-residue protein sequence, read N- to C-terminus: Phosphopantetheine adenylyltransferase (159 aa).

Substrate is bound at residue S9. Residues 9–10 and H17 each bind ATP; that span reads SF. Substrate-binding residues include K41, L74, and K88. Residues 89–91, E99, and 123–129 each bind ATP; these read GLR and YGYISST.

This sequence belongs to the bacterial CoaD family. In terms of assembly, homohexamer. The cofactor is Mg(2+).

It is found in the cytoplasm. It carries out the reaction (R)-4'-phosphopantetheine + ATP + H(+) = 3'-dephospho-CoA + diphosphate. It participates in cofactor biosynthesis; coenzyme A biosynthesis; CoA from (R)-pantothenate: step 4/5. Its function is as follows. Reversibly transfers an adenylyl group from ATP to 4'-phosphopantetheine, yielding dephospho-CoA (dPCoA) and pyrophosphate. This chain is Phosphopantetheine adenylyltransferase, found in Corynebacterium diphtheriae (strain ATCC 700971 / NCTC 13129 / Biotype gravis).